The sequence spans 315 residues: Olfactory receptor 5M1 (315 aa).

Over M1–K25 the chain is Extracellular. N5 is a glycosylation site (N-linked (GlcNAc...) asparagine). Residues I26–I46 traverse the membrane as a helical segment. The Cytoplasmic portion of the chain corresponds to L47–H54. A helical membrane pass occupies residues L55–S75. Topologically, residues N76 to T99 are extracellular. A disulfide bridge links C97 with C189. Residues Q100–L120 form a helical membrane-spanning segment. Residues D121–N139 lie on the Cytoplasmic side of the membrane. Residues I140–S160 traverse the membrane as a helical segment. Residues L161–K196 are Extracellular-facing. The helical transmembrane segment at M197–S217 threads the bilayer. The Cytoplasmic segment spans residues Y218 to A237. A helical transmembrane segment spans residues F238–M258. Over Y259–S271 the chain is Extracellular. A helical transmembrane segment spans residues K272 to L292. Residues R293–V315 lie on the Cytoplasmic side of the membrane.

The protein belongs to the G-protein coupled receptor 1 family.

Its subcellular location is the cell membrane. In terms of biological role, odorant receptor. This Homo sapiens (Human) protein is Olfactory receptor 5M1 (OR5M1).